We begin with the raw amino-acid sequence, 479 residues long: PTS system glucose-specific EIICB component (479 aa).

The PTS EIIC type-1 domain maps to 1-388 (MFKNAFSNLQ…FNLKTPGREK (388 aa)). The next 9 helical transmembrane spans lie at 15–35 (SLML…IGSA), 51–71 (AGSS…ALGF), 80–100 (LAAV…IPIF), 112–132 (YLLD…AYIF), 152–172 (FVPI…SIIW), 252–272 (GGFI…WHCA), 280–300 (IGGI…TEPI), 305–325 (ILVA…AFPI), and 356–376 (LFPI…YFMI). The PTS EIIB type-1 domain maps to 399-479 (KETALLVISI…IDNYMSNTNQ (81 aa)). Residue cysteine 421 is the Phosphocysteine intermediate; for EIIB activity of the active site. Cysteine 421 carries the post-translational modification Phosphocysteine.

Its subcellular location is the cell inner membrane. The catalysed reaction is N(pros)-phospho-L-histidyl-[protein] + D-glucose(out) = D-glucose 6-phosphate(in) + L-histidyl-[protein]. The phosphoenolpyruvate-dependent sugar phosphotransferase system (sugar PTS), a major carbohydrate active transport system, catalyzes the phosphorylation of incoming sugar substrates concomitantly with their translocation across the cell membrane. The enzyme II complex composed of PtsG and Crr is involved in glucose transport. In Buchnera aphidicola subsp. Baizongia pistaciae (strain Bp), this protein is PTS system glucose-specific EIICB component (ptsG).